Here is a 237-residue protein sequence, read N- to C-terminus: Sugar fermentation stimulation protein homolog (237 aa).

This sequence belongs to the SfsA family.

This Pseudomonas putida (strain W619) protein is Sugar fermentation stimulation protein homolog.